We begin with the raw amino-acid sequence, 564 residues long: Serine/threonine-protein kinase DBF20 (564 aa).

A Phosphoserine modification is found at S17. A disordered region spans residues 24-62 (LNIPKPTSPQAQYRPARKSENGRLTPGLPRSYKPCDSDD). One can recognise a Protein kinase domain in the interval 169 to 469 (FQILTQVGQG…FEQVRKMSYF (301 aa)). ATP contacts are provided by residues 175-183 (VGQGGYGQV) and K198. Catalysis depends on D292, which acts as the Proton acceptor. S366 is modified (phosphoserine). An AGC-kinase C-terminal domain is found at 470–547 (AEINFETLRT…RHRDGKQGSS (78 aa)). T536 is subject to Phosphothreonine.

The protein belongs to the protein kinase superfamily. Ser/Thr protein kinase family.

It catalyses the reaction L-seryl-[protein] + ATP = O-phospho-L-seryl-[protein] + ADP + H(+). The enzyme catalyses L-threonyl-[protein] + ATP = O-phospho-L-threonyl-[protein] + ADP + H(+). Is probably a Ser/Thr-protein kinase that may function in initiation of DNA synthesis and also in late nuclear division. The polypeptide is Serine/threonine-protein kinase DBF20 (DBF20) (Saccharomyces cerevisiae (strain ATCC 204508 / S288c) (Baker's yeast)).